Here is a 270-residue protein sequence, read N- to C-terminus: Orotidine 5'-phosphate decarboxylase (270 aa).

Residues Asp-39, Lys-61–His-63, Asp-93–Thr-102, Tyr-221, and Arg-239 each bind substrate. Lys-95 (proton donor) is an active-site residue.

The protein belongs to the OMP decarboxylase family.

It catalyses the reaction orotidine 5'-phosphate + H(+) = UMP + CO2. Its pathway is pyrimidine metabolism; UMP biosynthesis via de novo pathway; UMP from orotate: step 2/2. The polypeptide is Orotidine 5'-phosphate decarboxylase (URA3) (Candida albicans (strain SC5314 / ATCC MYA-2876) (Yeast)).